A 578-amino-acid chain; its full sequence is Threonylcarbamoyladenosine tRNA methylthiotransferase (578 aa).

Residues 63 to 171 enclose the MTTase N-terminal domain; it reads QKIWIRTWGC…VVEVVEETIK (109 aa). [4Fe-4S] cluster contacts are provided by C72 and C108. S121 carries the post-translational modification Phosphoserine. [4Fe-4S] cluster contacts are provided by C137, C213, C217, and C220. The 232-residue stretch at 199–430 folds into the Radical SAM core domain; the sequence is RKNPLIEIIS…RVFHSYNPYD (232 aa). Positions 430 to 492 constitute a TRAM domain; it reads DHKIGERQQV…KHFLKGQPVS (63 aa). The residue at position 498 (T498) is a Phosphothreonine. A helical membrane pass occupies residues 553 to 570; that stretch reads CALKVATGLALLALLLHF.

The protein belongs to the methylthiotransferase family. CDKAL1 subfamily. [4Fe-4S] cluster is required as a cofactor. Expressed in pancreas, liver and skeletal muscle, especially in white muscle fibers.

It is found in the endoplasmic reticulum membrane. The enzyme catalyses N(6)-L-threonylcarbamoyladenosine(37) in tRNA + (sulfur carrier)-SH + AH2 + 2 S-adenosyl-L-methionine = 2-methylsulfanyl-N(6)-L-threonylcarbamoyladenosine(37) in tRNA + (sulfur carrier)-H + 5'-deoxyadenosine + L-methionine + A + S-adenosyl-L-homocysteine + 2 H(+). In terms of biological role, catalyzes the methylthiolation of N6-threonylcarbamoyladenosine (t(6)A), leading to the formation of 2-methylthio-N6-threonylcarbamoyladenosine (ms(2)t(6)A) at position 37 in tRNAs that read codons beginning with adenine. The sequence is that of Threonylcarbamoyladenosine tRNA methylthiotransferase (Cdkal1) from Mus musculus (Mouse).